The primary structure comprises 562 residues: Protein wntless (562 aa).

Topologically, residues Met1–Lys13 are cytoplasmic. The helical transmembrane segment at Leu14 to Leu34 threads the bilayer. The Lumenal portion of the chain corresponds to Tyr35–Gln239. An N-linked (GlcNAc...) asparagine glycan is attached at Asn58. A helical transmembrane segment spans residues Ile240–Trp260. The Cytoplasmic segment spans residues Arg261–Pro270. A helical transmembrane segment spans residues Ala271–Leu291. Residues Glu292 to Gln311 are Lumenal-facing. Residues Gly312 to Ile332 form a helical membrane-spanning segment. The Cytoplasmic portion of the chain corresponds to Gln333–Arg344. The chain crosses the membrane as a helical span at residues Tyr345–Cys365. At Glu366–Thr390 the chain is on the lumenal side. Residues Phe391–Trp411 traverse the membrane as a helical segment. Topologically, residues Lys412–Arg441 are cytoplasmic. The chain crosses the membrane as a helical span at residues Phe442 to Met462. The Lumenal segment spans residues Gly463–Ser482. The chain crosses the membrane as a helical span at residues Ala483–Tyr503. At Ala504–Asp562 the chain is on the cytoplasmic side.

Belongs to the wntless family. As to quaternary structure, interacts with wg; in the Golgi. Interacts with Vps35, a component of the retromer complex; wls stability is regulated by Vps35.

It localises to the presynaptic cell membrane. It is found in the postsynaptic cell membrane. The protein resides in the cell membrane. The protein localises to the endoplasmic reticulum membrane. Its subcellular location is the endosome membrane. It localises to the golgi apparatus membrane. In terms of biological role, a segment polarity gene required for wingless (wg)-dependent patterning processes, acting in both wg-sending cells and wg-target cells. In non-neuronal cells wls directs wg secretion. The wls traffic loop encompasses the Golgi, the cell surface, an endocytic compartment and a retrograde route leading back to the Golgi, and involves clathrin-mediated endocytosis and the retromer complex (a conserved protein complex consisting of Vps35 and Vps26). In neuronal cells (the larval motorneuron NMJ), the wg signal moves across the synapse via the release of wls-containing exosome-like vesicles. Postsynaptic wls is required for the trafficking of fz2 through the fz2-interacting protein Grip. This Drosophila sechellia (Fruit fly) protein is Protein wntless.